The chain runs to 412 residues: Tyrosine--tRNA ligase (412 aa).

Tyrosine 31 lines the L-tyrosine pocket. The short motif at 36–45 (PTAPSLHIGH) is the 'HIGH' region element. The L-tyrosine site is built by tyrosine 162 and glutamine 166. A 'KMSKS' region motif is present at residues 222-226 (KIGKT). Residue lysine 225 participates in ATP binding. The S4 RNA-binding domain occupies 345–412 (KRWLDVVVQL…KKKKQVIDLN (68 aa)).

It belongs to the class-I aminoacyl-tRNA synthetase family. TyrS type 1 subfamily. As to quaternary structure, homodimer.

The protein localises to the cytoplasm. It carries out the reaction tRNA(Tyr) + L-tyrosine + ATP = L-tyrosyl-tRNA(Tyr) + AMP + diphosphate + H(+). Functionally, catalyzes the attachment of tyrosine to tRNA(Tyr) in a two-step reaction: tyrosine is first activated by ATP to form Tyr-AMP and then transferred to the acceptor end of tRNA(Tyr). The protein is Tyrosine--tRNA ligase of Chlamydia muridarum (strain MoPn / Nigg).